Reading from the N-terminus, the 450-residue chain is Phosphoglucosamine mutase (450 aa).

The active-site Phosphoserine intermediate is the Ser-101. Ser-101, Asp-240, Asp-242, and Asp-244 together coordinate Mg(2+). Ser-101 bears the Phosphoserine mark.

This sequence belongs to the phosphohexose mutase family. Mg(2+) is required as a cofactor. Activated by phosphorylation.

It catalyses the reaction alpha-D-glucosamine 1-phosphate = D-glucosamine 6-phosphate. In terms of biological role, catalyzes the conversion of glucosamine-6-phosphate to glucosamine-1-phosphate. In Streptococcus uberis (strain ATCC BAA-854 / 0140J), this protein is Phosphoglucosamine mutase.